Here is a 393-residue protein sequence, read N- to C-terminus: NAD(P)H-quinone oxidoreductase subunit H, chloroplastic (393 aa).

This sequence belongs to the complex I 49 kDa subunit family. In terms of assembly, NDH is composed of at least 16 different subunits, 5 of which are encoded in the nucleus.

Its subcellular location is the plastid. It is found in the chloroplast thylakoid membrane. The enzyme catalyses a plastoquinone + NADH + (n+1) H(+)(in) = a plastoquinol + NAD(+) + n H(+)(out). It carries out the reaction a plastoquinone + NADPH + (n+1) H(+)(in) = a plastoquinol + NADP(+) + n H(+)(out). Its function is as follows. NDH shuttles electrons from NAD(P)H:plastoquinone, via FMN and iron-sulfur (Fe-S) centers, to quinones in the photosynthetic chain and possibly in a chloroplast respiratory chain. The immediate electron acceptor for the enzyme in this species is believed to be plastoquinone. Couples the redox reaction to proton translocation, and thus conserves the redox energy in a proton gradient. The sequence is that of NAD(P)H-quinone oxidoreductase subunit H, chloroplastic from Gossypium hirsutum (Upland cotton).